A 411-amino-acid chain; its full sequence is Histidine--tRNA ligase (411 aa).

Belongs to the class-II aminoacyl-tRNA synthetase family. Homodimer.

It is found in the cytoplasm. The catalysed reaction is tRNA(His) + L-histidine + ATP = L-histidyl-tRNA(His) + AMP + diphosphate + H(+). This Dictyoglomus turgidum (strain DSM 6724 / Z-1310) protein is Histidine--tRNA ligase.